The following is a 274-amino-acid chain: MAALDGLPPLRDVIQRHGLDAKKALGQNFLLDLNLTQKIARTAGPLEGVTVIEVGPGPGGLTRAILALGAKKVVAIERDSRCLPALAEIGAHYPERLDVVEGDALKVDFEALADGPVRIIANLPYNVGTQLLVNWLLPGRWPPFWQSMTLMFQREVGLRIVASPDDDHYGRLGVLCGWRTKASLAFDVPPQAFTPPPKVTSTVVHLEPIEVPIPCSPAVLEKVTQAAFGQRRKMLRQSLKPLGGEALLAKAGIDPKRRAETLSVEEFCRLANCL.

S-adenosyl-L-methionine is bound by residues N28, L30, G55, E77, D103, and N122.

This sequence belongs to the class I-like SAM-binding methyltransferase superfamily. rRNA adenine N(6)-methyltransferase family. RsmA subfamily.

It is found in the cytoplasm. It carries out the reaction adenosine(1518)/adenosine(1519) in 16S rRNA + 4 S-adenosyl-L-methionine = N(6)-dimethyladenosine(1518)/N(6)-dimethyladenosine(1519) in 16S rRNA + 4 S-adenosyl-L-homocysteine + 4 H(+). Functionally, specifically dimethylates two adjacent adenosines (A1518 and A1519) in the loop of a conserved hairpin near the 3'-end of 16S rRNA in the 30S particle. May play a critical role in biogenesis of 30S subunits. This chain is Ribosomal RNA small subunit methyltransferase A, found in Sinorhizobium medicae (strain WSM419) (Ensifer medicae).